The following is a 131-amino-acid chain: Classical arabinogalactan protein 1 (131 aa).

A signal peptide spans 1-22; it reads MAFSKSLVFVLLAALLISSAVA. A disordered region spans residues 22 to 110; the sequence is AQSPAPAPSN…APGPAQGGAV (89 aa). Residues 50–60 are compositionally biased toward pro residues; sequence APAPEVSPSPS. The span at 61–72 shows a compositional bias: low complexity; the sequence is PAAALTPESSAS. A lipid anchor (GPI-anchor amidated glycine) is attached at Gly-108. A propeptide spans 109–131 (removed in mature form); that stretch reads AVSNKFASFGSVAVMLTAAVLVI.

It belongs to the classical AGP family. Post-translationally, O-glycosylated on the hydroxyproline residues. In terms of tissue distribution, predominantly expressed in flowers and at a lower level in roots and leaves.

Its subcellular location is the cell membrane. Functionally, proteoglycan that seems to be implicated in diverse developmental roles such as differentiation, cell-cell recognition, embryogenesis and programmed cell death. This chain is Classical arabinogalactan protein 1 (AGP1), found in Arabidopsis thaliana (Mouse-ear cress).